Reading from the N-terminus, the 284-residue chain is Rubber cis-polyprenyltransferase HRT2 (284 aa).

Residue D41 is part of the active site.

The protein belongs to the UPP synthase family. As to expression, predominantly expressed in latex.

It catalyses the reaction (cis-prenyl)(n)-diphosphate + isopentenyl diphosphate = (cis-prenyl)(n+1)-diphosphate + diphosphate. Functionally, proposed to be involved in rubber biosynthesis as a particle-bound rubber transferase responsible for the cis-1,4-polymerization of isoprene subunits. Probably requires additional factors for the production of high molecular mass rubber. The chain is Rubber cis-polyprenyltransferase HRT2 (HRT2) from Hevea brasiliensis (Para rubber tree).